A 217-amino-acid polypeptide reads, in one-letter code: Kunitz-type trypsin inhibitor-like 2 protein (217 aa).

A signal peptide spans 1–26 (MKPLSPLTLSFLLFVFITTLSLAFSN). Intrachain disulfides connect Cys-70/Cys-115 and Cys-168/Cys-175. Asn-191 carries N-linked (GlcNAc...) asparagine glycosylation.

This sequence belongs to the protease inhibitor I3 (leguminous Kunitz-type inhibitor) family.

The protein localises to the secreted. Functionally, might act as a protease inhibitor involved in plant defense responses. This is Kunitz-type trypsin inhibitor-like 2 protein (PIP20-2) from Pisum sativum (Garden pea).